Reading from the N-terminus, the 269-residue chain is Indole-3-glycerol phosphate synthase (269 aa).

Belongs to the TrpC family.

It carries out the reaction 1-(2-carboxyphenylamino)-1-deoxy-D-ribulose 5-phosphate + H(+) = (1S,2R)-1-C-(indol-3-yl)glycerol 3-phosphate + CO2 + H2O. The protein operates within amino-acid biosynthesis; L-tryptophan biosynthesis; L-tryptophan from chorismate: step 4/5. This chain is Indole-3-glycerol phosphate synthase, found in Rhodococcus opacus (strain B4).